Here is a 169-residue protein sequence, read N- to C-terminus: uncharacterized protein (169 aa).

The segment covering 144–157 (AEAHSASPASSDSS) has biased composition (low complexity). The disordered stretch occupies residues 144–169 (AEAHSASPASSDSSPLTNNIRPISIM). The span at 158 to 169 (PLTNNIRPISIM) shows a compositional bias: polar residues.

This is an uncharacterized protein from Saccharomyces cerevisiae (strain ATCC 204508 / S288c) (Baker's yeast).